The following is a 257-amino-acid chain: Zinc transporter ZupT (257 aa).

Helical transmembrane passes span 5–25 (LILTILAGAATFIGAFLGVLG), 32–52 (LLAFSLGFAAGIMLLISLMEM), and 61–81 (GMSPVLGYGMFIFGLLGYFGL). The Fe(2+) site is built by asparagine 120 and glutamate 123. Positions 123 and 148 each coordinate Zn(2+). Transmembrane regions (helical) follow at residues 137–157 (LGFGIALAVALHNIPEGLAVA), 171–191 (ILWAGISGLAEILGGVLAWLI), 195–215 (MISPVVMAAIMAAVAGIMVAL), and 236–256 (GVLCGMSVMGFSLVLLQTAGI). Residues asparagine 149, glutamate 152, and glutamate 181 each coordinate Fe(2+). Glutamate 152 serves as a coordination point for Zn(2+).

Belongs to the ZIP transporter (TC 2.A.5) family. ZupT subfamily.

The protein resides in the cell inner membrane. It carries out the reaction Zn(2+)(in) = Zn(2+)(out). Functionally, mediates zinc uptake. May also transport other divalent cations. In Escherichia coli O127:H6 (strain E2348/69 / EPEC), this protein is Zinc transporter ZupT.